Consider the following 386-residue polypeptide: AT-hook motif nuclear-localized protein 8 (386 aa).

Disordered regions lie at residues 1-175 (MDSR…LGGT) and 303-372 (KQSS…LHPH). Residues 54 to 70 (QQQSQTFHQQQQQQMDQ) show a composition bias toward low complexity. Basic residues predominate over residues 101 to 110 (VKKKRGRPRK). The Bipartite nuclear localization signal signature appears at 102–110 (KKKRGRPRK). A DNA-binding region (a.T hook 1) is located at residues 102–114 (KKKRGRPRKYTPD). Positions 126–135 (PLLSAASNSY) are enriched in polar residues. The span at 136–147 (GEGGVGDSGGNG) shows a compositional bias: gly residues. The segment at residues 155-167 (KRNRGRPPGSSKK) is a DNA-binding region (a.T hook 2). The PPC domain maps to 174–316 (GTSGVGFTPH…VNIARGQNPE (143 aa)). 2 stretches are compositionally biased toward low complexity: residues 328–337 (GSVSQGPSSE) and 361–372 (QQQQQQQPLHPH).

The protein localises to the nucleus. Functionally, transcription factor that specifically binds AT-rich DNA sequences related to the nuclear matrix attachment regions (MARs). The sequence is that of AT-hook motif nuclear-localized protein 8 from Arabidopsis thaliana (Mouse-ear cress).